Consider the following 426-residue polypeptide: Mothers against decapentaplegic homolog 7 (426 aa).

Residues 14 to 40 (WRSRAPGGEDEEEGVGGGGGGGGLRGE) are disordered. The segment covering 28–39 (VGGGGGGGGLRG) has biased composition (gly residues). N6-acetyllysine; alternate is present on residues K64 and K70. Glycyl lysine isopeptide (Lys-Gly) (interchain with G-Cter in ubiquitin); alternate cross-links involve residues K64 and K70. One can recognise an MH1 domain in the interval 64–207 (KAVRGAKGHH…LSRLCELESP (144 aa)). Residues 67–76 (RGAKGHHHPH) show a composition bias toward basic residues. The disordered stretch occupies residues 67-88 (RGAKGHHHPHPPSSGAGAAGGA). Zn(2+) is bound by residues C125, C180, C192, and H197. The short motif at 208–211 (PPPY) is the PY-motif element. Residues 208–217 (PPPYSRYPMD) are important for interaction with SMURF2. S249 carries the post-translational modification Phosphoserine. The MH2 domain occupies 261 to 426 (WCVVAYWEEK…CWLEVIFNSR (166 aa)).

It belongs to the dwarfin/SMAD family. In terms of assembly, interacts with COPS5. Interacts with STAMBP. Interacts with NEDD4L. Interacts with RNF111, AXIN1 and AXIN2. Interacts with PPP1R15A. Interacts with ACVR1B, SMURF1, SMURF2 and TGFBR1; SMAD7 recruits SMURF1 and SMURF2 to the TGF-beta receptor and regulates its degradation. Interacts with WWP1. Interacts with PDPK1 (via PH domain). Interacts with TSC22D1/TSC-22; the interaction requires TGF-beta and the interaction is inhibited by TGFBR1. Post-translationally, phosphorylation on Ser-249 does not affect its stability, nuclear localization or inhibitory function in TGFB signaling; however it affects its ability to regulate transcription. Phosphorylated by PDPK1. Ubiquitinated by WWP1. Polyubiquitinated by RNF111, which is enhanced by AXIN1 and promotes proteasomal degradation. In response to TGF-beta, ubiquitinated by SMURF1; which promotes its degradation. In terms of processing, acetylation prevents ubiquitination and degradation mediated by SMURF1. Ubiquitous.

Its subcellular location is the nucleus. It localises to the cytoplasm. Functionally, antagonist of signaling by TGF-beta (transforming growth factor) type 1 receptor superfamily members; has been shown to inhibit TGF-beta (Transforming growth factor) and activin signaling by associating with their receptors thus preventing SMAD2 access. Functions as an adapter to recruit SMURF2 to the TGF-beta receptor complex. Also acts by recruiting the PPP1R15A-PP1 complex to TGFBR1, which promotes its dephosphorylation. Positively regulates PDPK1 kinase activity by stimulating its dissociation from the 14-3-3 protein YWHAQ which acts as a negative regulator. This chain is Mothers against decapentaplegic homolog 7 (Smad7), found in Rattus norvegicus (Rat).